A 238-amino-acid chain; its full sequence is NAD(P)H-hydrate epimerase (238 aa).

In terms of domain architecture, YjeF N-terminal spans 11–217 (AAALDKDLMS…EIHQKYNLQL (207 aa)). (6S)-NADPHX is bound at residue 61 to 65 (NNGGD). K(+)-binding residues include Asn62 and Asp123. (6S)-NADPHX-binding positions include 127–133 (GFSFTGS) and Asp156. A K(+)-binding site is contributed by Ser159.

It belongs to the NnrE/AIBP family. Requires K(+) as cofactor.

The protein resides in the cytoplasm. Its subcellular location is the mitochondrion. The catalysed reaction is (6R)-NADHX = (6S)-NADHX. It carries out the reaction (6R)-NADPHX = (6S)-NADPHX. Functionally, catalyzes the epimerization of the S- and R-forms of NAD(P)HX, a damaged form of NAD(P)H that is a result of enzymatic or heat-dependent hydration. This is a prerequisite for the S-specific NAD(P)H-hydrate dehydratase to allow the repair of both epimers of NAD(P)HX. This Sclerotinia sclerotiorum (strain ATCC 18683 / 1980 / Ss-1) (White mold) protein is NAD(P)H-hydrate epimerase.